A 453-amino-acid chain; its full sequence is Phenolic glucoside malonyltransferase 1 (453 aa).

The Proton acceptor role is filled by H165. The short motif at 165–169 (HVAGD) is the HXXXD motif element. Malonyl-CoA contacts are provided by residues K254, H266, and 268 to 269 (TS). D394 acts as the Proton acceptor in catalysis. Residues 394 to 398 (DFGWG) carry the DFGWG motif motif.

It belongs to the plant acyltransferase family. Phenolic glucoside malonyltransferase subfamily. As to quaternary structure, monomer. As to expression, highly expressed in flower. Also expressed in flower bud, stem, root and leaf.

It catalyses the reaction a flavonol 3-O-beta-D-glucoside + malonyl-CoA = a flavonol 3-O-(6-O-malonyl-beta-D-glucoside) + CoA. It carries out the reaction a flavonol 7-O-beta-D-glucoside + malonyl-CoA = a flavonol 7-O-(6-O-malonyl-beta-D-glucoside) + CoA. Malonyltransferase with broad substrate specificity acting on phenolic glucosides including xenobiotic naphthols. Has activity against flavonoid 7-O-glucosides, flavonoid 3-O-glucosides and naphthol glucosides, and to a lesser extent against coumarin glucosides in vitro. Prefers malonyl-CoA as an acyl donor, but also active with succinyl-CoA and methylmalonyl-CoA, but not with acetyl-CoA. The sequence is that of Phenolic glucoside malonyltransferase 1 from Nicotiana tabacum (Common tobacco).